We begin with the raw amino-acid sequence, 233 residues long: Uridylate kinase (233 aa).

ATP-binding positions include 8–11, Gly51, and Arg55; that span reads KLSG. UMP is bound by residues Asp68 and 129–136; that span reads TSNPFFTT. Residues Thr156, Tyr162, and Asp165 each coordinate ATP.

The protein belongs to the UMP kinase family. In terms of assembly, homohexamer.

It localises to the cytoplasm. The catalysed reaction is UMP + ATP = UDP + ADP. The protein operates within pyrimidine metabolism; CTP biosynthesis via de novo pathway; UDP from UMP (UMPK route): step 1/1. With respect to regulation, inhibited by UTP. Catalyzes the reversible phosphorylation of UMP to UDP. This Thermosipho melanesiensis (strain DSM 12029 / CIP 104789 / BI429) protein is Uridylate kinase.